The chain runs to 296 residues: Acetylglutamate kinase (296 aa).

Residues 68–69 (GG), arginine 90, and asparagine 193 each bind substrate.

It belongs to the acetylglutamate kinase family. ArgB subfamily.

The protein resides in the cytoplasm. It carries out the reaction N-acetyl-L-glutamate + ATP = N-acetyl-L-glutamyl 5-phosphate + ADP. It functions in the pathway amino-acid biosynthesis; L-arginine biosynthesis; N(2)-acetyl-L-ornithine from L-glutamate: step 2/4. Its function is as follows. Catalyzes the ATP-dependent phosphorylation of N-acetyl-L-glutamate. In Acidothermus cellulolyticus (strain ATCC 43068 / DSM 8971 / 11B), this protein is Acetylglutamate kinase.